The chain runs to 189 residues: Large ribosomal subunit protein uL10 (189 aa).

Belongs to the universal ribosomal protein uL10 family. As to quaternary structure, part of the ribosomal stalk of the 50S ribosomal subunit. The N-terminus interacts with L11 and the large rRNA to form the base of the stalk. The C-terminus forms an elongated spine to which L12 dimers bind in a sequential fashion forming a multimeric L10(L12)X complex.

Functionally, forms part of the ribosomal stalk, playing a central role in the interaction of the ribosome with GTP-bound translation factors. The protein is Large ribosomal subunit protein uL10 of Rippkaea orientalis (strain PCC 8801 / RF-1) (Cyanothece sp. (strain PCC 8801)).